The sequence spans 59 residues: Cecropin-A (59 aa).

The signal sequence occupies residues 1 to 23; it reads MNFTKLFLLIAMAVLLLTGQSEA. A propeptide spans 58-59 (removed in mature form (AeaeCec2)); the sequence is GK.

In terms of tissue distribution, hemolymph (at protein level).

It localises to the secreted. Its function is as follows. Antimicrobial peptide. Antibacterial activity against Gram-negative bacteria E.coli D22 and D31, E.carotovora, K.pneumoniae, P.aeruginosa, S.typhimurium, E.cloacae B12 and X.campestris and Gram-positive bacteria A.viridans, M.luteus, B.megaterium and S.pyogenes. Possesses antifungal activity against F.oxysporum, F.culmorum and N.crassa, C.albicans, C.neoformans and S.cerevisiae. No activity against Gram-negative S.marcescens Db11, Gram-positive B.cereus, B.subtilis, B.thuringiensis, S.aureus and L.monocytogenes, the fungi A.fumigatus and B.bassiana and C.glabrata. Partially neutralizes lipopolysaccharides (LPS). Exhibits anti-inflammatory properties: inhibits LPS-induced iNOS/NOS2 transcription, nitric oxide (NO) and pro-inflammatory cytokine production in mouse macrophages and human peripheral blood mononuclear cells (PBMCs); inhibits LPS-induced activation of MAPK and NF-kappa-B signaling pathways in mouse macrophages. This chain is Cecropin-A (CECA), found in Aedes aegypti (Yellowfever mosquito).